Here is a 429-residue protein sequence, read N- to C-terminus: Phosphomethylpyrimidine synthase 1 (429 aa).

Substrate-binding positions include Asn65, Met94, Tyr123, His162, 184–186 (SRG), 225–228 (DGLR), and Glu264. A Zn(2+)-binding site is contributed by His268. Tyr291 contributes to the substrate binding site. His332 provides a ligand contact to Zn(2+). Cys408, Cys411, and Cys415 together coordinate [4Fe-4S] cluster.

This sequence belongs to the ThiC family. It depends on [4Fe-4S] cluster as a cofactor.

The catalysed reaction is 5-amino-1-(5-phospho-beta-D-ribosyl)imidazole + S-adenosyl-L-methionine = 4-amino-2-methyl-5-(phosphooxymethyl)pyrimidine + CO + 5'-deoxyadenosine + formate + L-methionine + 3 H(+). The protein operates within cofactor biosynthesis; thiamine diphosphate biosynthesis. Its function is as follows. Catalyzes the synthesis of the hydroxymethylpyrimidine phosphate (HMP-P) moiety of thiamine from aminoimidazole ribotide (AIR) in a radical S-adenosyl-L-methionine (SAM)-dependent reaction. The polypeptide is Phosphomethylpyrimidine synthase 1 (Methanosphaera stadtmanae (strain ATCC 43021 / DSM 3091 / JCM 11832 / MCB-3)).